The chain runs to 913 residues: MDYKETLNLPQTNFQMKANLVQKEPNMLKYWEEKEIYKKTLETREGAPTYLLHDGPPYANGDIHLGTAMNKILKDFVTRYKTMRGYRVPYVPGWDTHGLPIEHRVTTTLGEEAKKKSPVEIRKLCKEFALKYVDIQREEFKRLGVKGDWEHPYITLTPDYEYHILDVFKTLVENGNVYRGNKPVYWCPTCRTALAEAEIEYHDHESPSIYVKFQMVDQPDTYVVIWTTTPWTIPANVAIALHPEYEYLKIKVGNEYWIVADGLLQKFASETGIEFQVTEKFLGKTLEGKLTKHPLYDRTSVIVLADYVTLEDGTGCVHTAPGHGEEDYQTGLKYNLPILSPVDDEGKFTKEAGKYEGLKIWDANKVVVEDLEKAGALIKFGKISHSYPHCWRCKGPVMFRATPQWFISVNKNNLRGKVLEQIKKVKWYPSWGENRITAMVQERPDWTISRQRVWGVPIPAVKCKSCDEVTLDPKVIEHFANIVKEKGTDAWFELDIKELIPSDFSCPKCGSKEFEKTYDTLDVWIDSGCSWEAVIRSKGEKFPVDLYLEGDDQHRGWFQSSIFLATAKTGNAPFKTVVTHGFIKDEQGRKMSKSLGNVIDPMEIVNKYGADILRLWVASTDFFDNIRVGKNIIEQQVEVYRKLRNTLRYLLSNLYDFTENDILPYEKLLPLDKWALGRLQKYIEQVTQYYEEFEYSKVYNATVKYCTTELSSIYLDILKDRLYVEAKDSIYRRSAQTVLYYILEALIKILAPIMPFTAEEAYQESPLKKYESVHLENWPEVRKEFINENLLEEFQQLLLVRDDVLKALENARSSDVIGHSLDAHVKIEPKNSEIGQLLEKYADMLEDFFIVSKVSILNELSDGINGQLVTVLVEHAEGQKCQRCWKYHPDTGKDENHPETCPRCSAVLRGERK.

The 'HIGH' region motif lies at 57–67 (PYANGDIHLGT). E549 provides a ligand contact to L-isoleucyl-5'-AMP. The short motif at 590-594 (KMSKS) is the 'KMSKS' region element. Residue K593 participates in ATP binding. C881, C884, C901, and C904 together coordinate Zn(2+).

The protein belongs to the class-I aminoacyl-tRNA synthetase family. IleS type 1 subfamily. In terms of assembly, monomer. Zn(2+) is required as a cofactor.

It is found in the cytoplasm. The enzyme catalyses tRNA(Ile) + L-isoleucine + ATP = L-isoleucyl-tRNA(Ile) + AMP + diphosphate. Functionally, catalyzes the attachment of isoleucine to tRNA(Ile). As IleRS can inadvertently accommodate and process structurally similar amino acids such as valine, to avoid such errors it has two additional distinct tRNA(Ile)-dependent editing activities. One activity is designated as 'pretransfer' editing and involves the hydrolysis of activated Val-AMP. The other activity is designated 'posttransfer' editing and involves deacylation of mischarged Val-tRNA(Ile). The protein is Isoleucine--tRNA ligase of Fervidobacterium nodosum (strain ATCC 35602 / DSM 5306 / Rt17-B1).